Consider the following 405-residue polypeptide: Cystathionine gamma-lyase (405 aa).

Arg62, Tyr114, and Arg119 together coordinate substrate. Position 212 is an N6-(pyridoxal phosphate)lysine (Lys212). Glu339 provides a ligand contact to substrate.

The protein belongs to the trans-sulfuration enzymes family. As to quaternary structure, homotetramer. Interacts with CALM in a calcium-dependent manner. The cofactor is pyridoxal 5'-phosphate.

The protein localises to the cytoplasm. It catalyses the reaction L,L-cystathionine + H2O = 2-oxobutanoate + L-cysteine + NH4(+). It participates in amino-acid biosynthesis; L-cysteine biosynthesis; L-cysteine from L-homocysteine and L-serine: step 2/2. Catalyzes the last step in the trans-sulfuration pathway from methionine to cysteine. Has broad substrate specificity. Converts cystathionine to cysteine, ammonia and 2-oxobutanoate. Converts two cysteine molecules to lanthionine and hydrogen sulfide. Can also accept homocysteine as substrate. Specificity depends on the levels of the endogenous substrates. Generates the endogenous signaling molecule hydrogen sulfide (H2S), and so contributes to the regulation of blood pressure. Acts as a cysteine-protein sulfhydrase by mediating sulfhydration of target proteins: sulfhydration consists of converting -SH groups into -SSH on specific cysteine residues of target proteins such as GAPDH, PTPN1 and NF-kappa-B subunit RELA, thereby regulating their function. The polypeptide is Cystathionine gamma-lyase (CTH) (Bos taurus (Bovine)).